A 156-amino-acid polypeptide reads, in one-letter code: RNA pyrophosphohydrolase (156 aa).

Residues 6 to 148 (NYRPNVAAIV…KKNIYVKVIK (143 aa)) enclose the Nudix hydrolase domain. The Nudix box signature appears at 43–64 (GGIDKGESAKNALFRELKEEIG).

Belongs to the Nudix hydrolase family. RppH subfamily. The cofactor is a divalent metal cation.

Functionally, accelerates the degradation of transcripts by removing pyrophosphate from the 5'-end of triphosphorylated RNA, leading to a more labile monophosphorylated state that can stimulate subsequent ribonuclease cleavage. The chain is RNA pyrophosphohydrolase from Campylobacter jejuni subsp. doylei (strain ATCC BAA-1458 / RM4099 / 269.97).